Consider the following 338-residue polypeptide: tRNA N6-adenosine threonylcarbamoyltransferase (338 aa).

Positions 109 and 113 each coordinate Fe cation. Substrate is bound by residues 132-136 (AISGA), D165, G178, and N277. D302 serves as a coordination point for Fe cation.

The protein belongs to the KAE1 / TsaD family. The cofactor is Fe(2+).

Its subcellular location is the cytoplasm. The catalysed reaction is L-threonylcarbamoyladenylate + adenosine(37) in tRNA = N(6)-L-threonylcarbamoyladenosine(37) in tRNA + AMP + H(+). Functionally, required for the formation of a threonylcarbamoyl group on adenosine at position 37 (t(6)A37) in tRNAs that read codons beginning with adenine. Is involved in the transfer of the threonylcarbamoyl moiety of threonylcarbamoyl-AMP (TC-AMP) to the N6 group of A37, together with TsaE and TsaB. TsaD likely plays a direct catalytic role in this reaction. The sequence is that of tRNA N6-adenosine threonylcarbamoyltransferase from Chlamydia trachomatis serovar L2b (strain UCH-1/proctitis).